Here is a 103-residue protein sequence, read N- to C-terminus: Small ribosomal subunit protein uS10 (103 aa).

This sequence belongs to the universal ribosomal protein uS10 family. As to quaternary structure, part of the 30S ribosomal subunit.

In terms of biological role, involved in the binding of tRNA to the ribosomes. In Acinetobacter baylyi (strain ATCC 33305 / BD413 / ADP1), this protein is Small ribosomal subunit protein uS10.